We begin with the raw amino-acid sequence, 381 residues long: MSVKDKREKMTATREEFAEVQQAFAAYADEFAADVDDKRDVSELVDGIDTLRTEMNSTNDAFRAYSEEFAADVEHFHTSVADRRDAFDAYADIFATDVAEMQDVSDLLAAIDDLRAEMDETHEAFDAYADAFVTDVATLRDVSDLLTAISELQSEFVSVQGEFNGYASEFGADIDQFHAVVAEKRDGHKDVADAFLQYREEFHGVEVQSLLDNIAAFQREMGDYRKAFETTEEAFASFARDFYGQGAAPMATPLNNAAETAVTGTETEVDIPPIEDSVEPDGEDEDSKADDVEAEAEVETVEMEFGAEMDTEADEDVQSESVREDDQFLDDETPEDMVQCLVCGEYYQAITEPHLQTHDMTIKKYREEYGEDVPLRPDDKA.

Repeat copies occupy residues 22–59 (QAFAAYADEFAADVDDKRDVSELVDGIDTLRTEMNSTN), 60–84 (DAFRAYSEEFAADVEHFHTSVADRR), 85–122 (DAFDAYADIFATDVAEMQDVSDLLAAIDDLRAEMDETH), 123–160 (EAFDAYADAFVTDVATLRDVSDLLTAISELQSEFVSVQ), 161–192 (GEFNGYASEFGADIDQFHAVVAEKRDGHKDVA), 193–232 (DAFLQYREEFHGVEVQSLLDNIAAFQREMGDYRKAFETTE), and 233–274 (EAFA…IPPI). The segment at 22 to 274 (QAFAAYADEF…TETEVDIPPI (253 aa)) is 7 X approximate tandem repeats. Positions 261-333 (AVTGTETEVD…EDDQFLDDET (73 aa)) are disordered. Positions 276-318 (DSVEPDGEDEDSKADDVEAEAEVETVEMEFGAEMDTEADEDVQ) are enriched in acidic residues.

This sequence belongs to the halobacterial gas vesicle GvpC family. In terms of processing, detected as 2 slightly different sizes in vivo; the proteins appears larger in SDS-PAGE probably due to the acidic tail.

The protein localises to the gas vesicle. In terms of biological role, confers stability, involved in shaping gas vesicles (GV), hollow, gas filled proteinaceous nanostructures found in some microorganisms. They allow positioning of halobacteria at the optimal depth for growth in the poorly aerated, shallow brine pools of their habitat. Functionally, expression of a 9.5 kb mc-vac DNA fragment containing 2 divergently transcribed regions (gvpD-gvpE-gvpF-gvpG-gvpH-gvpI-gvpJ-gvpK-gvpL-gvpM and gvpA-gvpC-gvpN-gvpO) allows H.volcanii to produce gas vesicles. In Haloferax mediterranei (strain ATCC 33500 / DSM 1411 / JCM 8866 / NBRC 14739 / NCIMB 2177 / R-4) (Halobacterium mediterranei), this protein is Gas vesicle protein C.